The chain runs to 203 residues: NAD(P)H dehydrogenase (quinone) (203 aa).

The Flavodoxin-like domain maps to 3–194 (VLIPFYSMYG…AGARYQGKYI (192 aa)). FMN contacts are provided by residues 9–14 (SMYGHI) and 82–84 (TRF). Residue Tyr11 participates in NAD(+) binding. Trp102 contacts substrate. FMN-binding positions include 117-123 (SSATQHG) and His138.

It belongs to the WrbA family. Requires FMN as cofactor.

It carries out the reaction a quinone + NADH + H(+) = a quinol + NAD(+). It catalyses the reaction a quinone + NADPH + H(+) = a quinol + NADP(+). The polypeptide is NAD(P)H dehydrogenase (quinone) (Geobacter metallireducens (strain ATCC 53774 / DSM 7210 / GS-15)).